The sequence spans 434 residues: MRLARLLRGGTSVRPLCAVPCASRSLASASASGSGPASELGVPGQVDFYARFSPSPLSMKQFLDFGSVNACEKTSFMFLRQELPVRLANIMKEISLLPDNLLRTPSVQLVQSWYIQSLQELLDFKDKSAEDAKTIYEFTDTVIRIRNRHNDVIPTMAQGVTEYKESFGVDPVTSQNVQYFLDRFYMSRISIRMLLNQHSLLFGGKGSPSHRKHIGSINPNCDVVEVIKDGYENARRLCDLYYVNSPELELEELNAKSPGQTIQVVYVPSHLYHMVFELFKNAMRATMEHHADKGVYPPIQVHVTLGEEDLTVKMSDRGGGVPLRKIDRLFNYMYSTAPRPRVETSRAVPLAGFGYGLPISRLYAQYFQGDLKLYSLEGYGTDAVIYIKALSTESVERLPVYNKAAWKHYKANHEADDWCVPSREPKDMTTFRSS.

Residues 1–26 (MRLARLLRGGTSVRPLCAVPCASRSL) constitute a mitochondrion transit peptide. The residue at position 136 (Tyr-136) is a Phosphotyrosine; by FGFR1. Positions 161–391 (TEYKESFGVD…DAVIYIKALS (231 aa)) constitute a Histidine kinase domain. Phosphotyrosine; by FGFR1, ABL1, FLT3 and JAK2 is present on Tyr-241. The residue at position 242 (Tyr-242) is a Phosphotyrosine; by FGFR1. Residues 277 to 284 (ELFKNAMR), Asp-316, 335 to 336 (ST), and 352 to 357 (GFGYGL) each bind ATP. The residue at position 336 (Thr-336) is a Phosphothreonine. Residue Lys-403 is modified to N6-succinyllysine.

Belongs to the PDK/BCKDK protein kinase family. As to quaternary structure, homodimer, and heterodimer with PDK2. Interacts with the pyruvate dehydrogenase complex subunit DLAT, and is part of the multimeric pyruvate dehydrogenase complex that contains multiple copies of pyruvate dehydrogenase (E1), dihydrolipoamide acetyltransferase (DLAT, E2) and lipoamide dehydrogenase (DLD, E3). Interacts with phosphoglycerate kinase PGK1; the interaction is direct, occurs under hypoxic conditions and leads to PDK1-mediated inhibition of pyruvate dehydrogenase complex activity. In terms of processing, phosphorylated by constitutively activated ABL1, FGFR1, FLT3 and JAK2 (in vitro), and this may also occur in cancer cells that express constitutively activated ABL1, FGFR1, FLT3 and JAK2. Phosphorylation at Tyr-241 and Tyr-242 strongly increases kinase activity, while phosphorylation at Tyr-136 has a lesser effect. Phosphorylated under hypoxic conditions at Thr-336 by phosphoglycerate kinase PGK1 which has an activating effect.

It localises to the mitochondrion matrix. The enzyme catalyses L-seryl-[pyruvate dehydrogenase E1 alpha subunit] + ATP = O-phospho-L-seryl-[pyruvate dehydrogenase E1 alpha subunit] + ADP + H(+). Its function is as follows. Kinase that plays a key role in regulation of glucose and fatty acid metabolism and homeostasis via phosphorylation of the pyruvate dehydrogenase subunits PDHA1 and PDHA2. This inhibits pyruvate dehydrogenase activity, and thereby regulates metabolite flux through the tricarboxylic acid cycle, down-regulates aerobic respiration and inhibits the formation of acetyl-coenzyme A from pyruvate. Plays an important role in cellular responses to hypoxia and is important for cell proliferation under hypoxia. This chain is [Pyruvate dehydrogenase (acetyl-transferring)] kinase isozyme 1, mitochondrial (Pdk1), found in Mus musculus (Mouse).